The primary structure comprises 136 residues: MAKSDVKGINLGMGTGRRKSSVARVYIREGKGDIKINNRDFDSYIQLENLKTIALSPLVLTNTLGKYDLYINIYGGGISGQAGAIRHGIARALFDLDEEYKMVLKSNGFLTRDSRKVERKKFGKKKARKSFQFSKR.

It belongs to the universal ribosomal protein uS9 family.

The sequence is that of Small ribosomal subunit protein uS9 from Borrelia turicatae (strain 91E135).